Reading from the N-terminus, the 446-residue chain is uncharacterized protein (446 aa).

2 positions are modified to phosphoserine: Ser-393 and Ser-397. The segment at 411 to 431 (LSSTERRDLDRVRDKQKKQDQ) is disordered.

Belongs to the IFRD family.

It localises to the cytoplasm. This is an uncharacterized protein from Schizosaccharomyces pombe (strain 972 / ATCC 24843) (Fission yeast).